Reading from the N-terminus, the 236-residue chain is Purine nucleoside phosphorylase (236 aa).

Residue H5 coordinates a purine D-ribonucleoside. Phosphate contacts are provided by residues G21, R25, R43, and 86–89; that span reads RYGT. A purine D-ribonucleoside contacts are provided by residues E163, 180–182, and 204–205; these read EME and SD.

It belongs to the PNP/UDP phosphorylase family. Homohexamer; disulfide-linked. Trimer of homodimers, with three symmetric intersubunit disulfide bonds linking the dimers to one another.

The catalysed reaction is S-methyl-5'-thioadenosine + phosphate = 5-(methylsulfanyl)-alpha-D-ribose 1-phosphate + adenine. The enzyme catalyses a purine D-ribonucleoside + phosphate = a purine nucleobase + alpha-D-ribose 1-phosphate. It catalyses the reaction a purine 2'-deoxy-D-ribonucleoside + phosphate = a purine nucleobase + 2-deoxy-alpha-D-ribose 1-phosphate. It participates in purine metabolism; purine nucleoside salvage. Its function is as follows. Cleavage of guanosine or inosine to respective bases and sugar-1-phosphate molecules. Cleaves inosine, guanosine, and adenosine with a better efficiency than MTA. The protein is Purine nucleoside phosphorylase of Saccharolobus solfataricus (strain ATCC 35092 / DSM 1617 / JCM 11322 / P2) (Sulfolobus solfataricus).